The sequence spans 230 residues: Acyl-protein thioesterase 1 (230 aa).

Catalysis depends on charge relay system residues Ser-119, Asp-174, and His-208. Lys-224 is subject to N6-acetyllysine.

The protein belongs to the AB hydrolase superfamily. AB hydrolase 2 family. In terms of assembly, homodimer.

It localises to the cytoplasm. The protein localises to the cell membrane. Its subcellular location is the nucleus membrane. The protein resides in the endoplasmic reticulum. The catalysed reaction is S-hexadecanoyl-L-cysteinyl-[protein] + H2O = L-cysteinyl-[protein] + hexadecanoate + H(+). It carries out the reaction 1-hexadecanoyl-sn-glycero-3-phosphocholine + H2O = sn-glycerol 3-phosphocholine + hexadecanoate + H(+). The enzyme catalyses a 1-(9Z-octadecenoyl)-2-acyl-sn-glycero-3-phosphocholine + H2O = a 2-acyl-sn-glycero-3-phosphocholine + (9Z)-octadecenoate + H(+). Its function is as follows. Acts as an acyl-protein thioesterase. Hydrolyzes fatty acids from S-acylated cysteine residues in proteins such as trimeric G alpha proteins or HRAS. Acts as a palmitoyl thioesterase that catalyzes depalmitoylation of proteins, such as ADRB2, KCNMA1 and SQSTM1. Acts as a negative regulator of autophagy by mediating palmitoylation of SQSTM1, decreasing affinity between SQSTM1 and ATG8 proteins and recruitment of ubiquitinated cargo proteins to autophagosomes. Acts as a lysophospholipase and hydrolyzes lysophosphatidylcholine (lyso-PC). Also hydrolyzes lysophosphatidylethanolamine (lyso-PE), lysophosphatidylinositol (lyso-PI) and lysophosphatidylserine (lyso-PS). Has much higher thioesterase activity than lysophospholipase activity. Contributes to the production of lysophosphatidic acid (LPA) during blood coagulation by recognizing and cleaving plasma phospholipids to generate lysophospholipids which in turn act as substrates for ENPP2 to produce LPA. This chain is Acyl-protein thioesterase 1 (Lypla1), found in Mus musculus (Mouse).